We begin with the raw amino-acid sequence, 429 residues long: Ribosomal RNA small subunit methyltransferase B (429 aa).

Residues 254–260 (CAAPGGK), D277, D303, and D322 each bind S-adenosyl-L-methionine. Residue C375 is the Nucleophile of the active site.

This sequence belongs to the class I-like SAM-binding methyltransferase superfamily. RsmB/NOP family.

The protein resides in the cytoplasm. The catalysed reaction is cytidine(967) in 16S rRNA + S-adenosyl-L-methionine = 5-methylcytidine(967) in 16S rRNA + S-adenosyl-L-homocysteine + H(+). Its function is as follows. Specifically methylates the cytosine at position 967 (m5C967) of 16S rRNA. This chain is Ribosomal RNA small subunit methyltransferase B, found in Escherichia coli O157:H7.